The chain runs to 408 residues: DNA primase DnaG (408 aa).

In terms of domain architecture, Toprim spans 171 to 250 (DAIIIVEGRA…AYSPRGKSVE (80 aa)). Residues E177, D219, and D221 each contribute to the Mg(2+) site. The tract at residues 276–323 (AEENVERLPPSAAPAEVRAPAGAGRTSEGERPPRREWDSKPPSTLGEH) is disordered. Residues 284–298 (PPSAAPAEVRAPAGA) are compositionally biased toward low complexity. Residues 302–314 (SEGERPPRREWDS) are compositionally biased toward basic and acidic residues.

It belongs to the archaeal DnaG primase family. Forms a ternary complex with MCM helicase and DNA. The cofactor is Mg(2+).

The catalysed reaction is ssDNA + n NTP = ssDNA/pppN(pN)n-1 hybrid + (n-1) diphosphate.. Its function is as follows. RNA polymerase that catalyzes the synthesis of short RNA molecules used as primers for DNA polymerase during DNA replication. This is DNA primase DnaG from Methanoculleus marisnigri (strain ATCC 35101 / DSM 1498 / JR1).